A 1404-amino-acid polypeptide reads, in one-letter code: Microtubule organization protein AKNA (1404 aa).

Disordered regions lie at residues Met1 to Leu304 and Gln317 to Ile382. Ser51 carries the phosphoserine modification. Over residues Trp70–Ser91 the composition is skewed to acidic residues. The segment covering Lys185–Ser203 has biased composition (polar residues). Ser302 carries the phosphoserine modification. Phosphoserine is present on residues Ser485 and Ser520. The interval Ala494–Thr549 is disordered. Residues Pro534–Thr549 show a composition bias toward polar residues. Ser617 is subject to Phosphoserine. Residues Met645–Leu659 are compositionally biased toward basic and acidic residues. The disordered stretch occupies residues Met645 to Pro708. Composition is skewed to polar residues over residues Gln660 to His674 and Asp686 to Leu707. A phosphoserine mark is found at Ser750 and Ser753. The tract at residues Leu754 to Ala787 is PEST. Disordered regions lie at residues Pro755–Asn1038 and His1085–Val1185. The span at Arg759 to Gln773 shows a compositional bias: acidic residues. Positions Thr803–Thr813 are enriched in basic and acidic residues. Phosphoserine occurs at positions 831 and 860. The PEST stretch occupies residues His885–Ser906. 3 stretches are compositionally biased toward polar residues: residues Ser903–Thr914, His921–Thr933, and Ser963–Ser974. Ser971 carries the post-translational modification Phosphoserine. Low complexity predominate over residues Thr1015–Pro1029. Polar residues predominate over residues His1085–Ser1098. Residues Gln1088–Ser1096 constitute a DNA-binding region (a.T hook). A phosphoserine mark is found at Ser1144 and Ser1145. Over residues Ser1155–Glu1167 the composition is skewed to basic and acidic residues. Phosphoserine is present on Ser1200. 2 disordered regions span residues Ser1208–Gly1235 and Ser1253–Ser1286. A compositionally biased stretch (polar residues) spans Thr1221–Gly1235. Residues Ser1339, Ser1352, and Ser1389 each carry the phosphoserine modification.

This sequence belongs to the AKNA family. In terms of assembly, interacts with DCTN1. Interacts with MAPRE1/EB1. Interacts with ODF2. Interacts with CAMSAP3. Post-translationally, phosphorylated; phosphorylation regulates dissociation from and reassembly at the centrosome. In terms of tissue distribution, expressed in neural stem cells isolated at the peak of subventricular zone (SVZ): localizes at the subdistal appendages of the mother centriole in specific subtypes of neural stem cells and in almost all basal progenitors.

It is found in the cytoplasm. It localises to the cytoskeleton. The protein localises to the microtubule organizing center. The protein resides in the centrosome. Its subcellular location is the centriole. It is found in the nucleus. Its function is as follows. Centrosomal protein that plays a key role in cell delamination by regulating microtubule organization. Required for the delamination and retention of neural stem cells from the subventricular zone during neurogenesis. Also regulates the epithelial-to-mesenchymal transition in other epithelial cells. Acts by increasing centrosomal microtubule nucleation and recruiting nucleation factors and minus-end stabilizers, thereby destabilizing microtubules at the adherens junctions and mediating constriction of the apical endfoot. In addition, may also act as a transcription factor that specifically activates the expression of the CD40 receptor and its ligand CD40L/CD154, two cell surface molecules on lymphocytes that are critical for antigen-dependent-B-cell development. Binds to A/T-rich promoters. It is unclear how it can both act as a microtubule organizer and as a transcription factor; additional evidences are required to reconcile these two apparently contradictory functions. The protein is Microtubule organization protein AKNA of Mus musculus (Mouse).